Consider the following 161-residue polypeptide: Putative pre-16S rRNA nuclease (161 aa).

This sequence belongs to the YqgF nuclease family.

Its subcellular location is the cytoplasm. In terms of biological role, could be a nuclease involved in processing of the 5'-end of pre-16S rRNA. The polypeptide is Putative pre-16S rRNA nuclease (Rhodospirillum rubrum (strain ATCC 11170 / ATH 1.1.1 / DSM 467 / LMG 4362 / NCIMB 8255 / S1)).